The primary structure comprises 466 residues: Coagulation factor VII (466 aa).

The first 20 residues, 1–20 (MVSQALRLLCLLLGLQGCLA), serve as a signal peptide directing secretion. The propeptide occupies 21 to 60 (AGGVAKASGGETRDMPWKPGPHRVFVTQEEAHGVLHRRRR). The Gla domain maps to 61–105 (ANAFLEELRPGSLERECKEEQCSFEEAREIFKDAERTKLFWISYS). 4-carboxyglutamate is present on residues Glu66, Glu67, Glu74, Glu76, Glu79, Glu80, Glu85, Glu86, Glu89, and Glu95. A disulfide bridge connects residues Cys77 and Cys82. One can recognise an EGF-like 1; calcium-binding domain in the interval 106 to 142 (DGDQCASSPCQNGGSCKDQLQSYICFCLPAFEGRNCE). Intrachain disulfides connect Cys110-Cys121, Cys115-Cys130, Cys132-Cys141, Cys151-Cys162, Cys158-Cys172, Cys174-Cys187, Cys195-Cys322, Cys219-Cys224, Cys238-Cys254, and Cys370-Cys389. A glycan (O-linked (Glc...) serine; alternate) is linked at Ser112. Residue Ser112 is glycosylated (O-linked (Xyl...) serine; alternate). O-linked (Fuc) serine glycosylation occurs at Ser120. Asp123 carries the (3R)-3-hydroxyaspartate modification. In terms of domain architecture, EGF-like 2 spans 147 to 188 (DQLICVNENGGCEQYCSDHTGTKRSCRCHEGYSLLADGVSCT). An N-linked (GlcNAc...) asparagine glycan is attached at Asn205. The 240-residue stretch at 213–452 (IVGGKVCPKG…YIEWLQKLMR (240 aa)) folds into the Peptidase S1 domain. Active-site charge relay system residues include His253 and Asp302. The N-linked (GlcNAc...) asparagine glycan is linked to Asn382. Residue Asp398 coordinates substrate. The cysteines at positions 400 and 428 are disulfide-linked. Ser404 serves as the catalytic Charge relay system.

The protein belongs to the peptidase S1 family. In terms of assembly, heterodimer of a light chain and a heavy chain linked by a disulfide bond. Interacts (activated) with iripin-8, a serine protease inhibitor from Ixodes ricinus saliva. Post-translationally, the vitamin K-dependent, enzymatic carboxylation of some glutamate residues allows the modified protein to bind calcium. The iron and 2-oxoglutarate dependent 3-hydroxylation of aspartate and asparagine is (R) stereospecific within EGF domains. In terms of processing, O- and N-glycosylated. N-glycosylation at Asn-205 occurs cotranslationally and is mediated by STT3A-containing complexes, while glycosylation at Asn-382 is post-translational and is mediated STT3B-containing complexes before folding. O-fucosylated by POFUT1 on a conserved serine or threonine residue found in the consensus sequence C2-X(4,5)-[S/T]-C3 of EGF domains, where C2 and C3 are the second and third conserved cysteines. Post-translationally, can be either O-glucosylated or O-xylosylated at Ser-112 by POGLUT1 in vitro. In terms of tissue distribution, plasma.

The protein localises to the secreted. The catalysed reaction is Selective cleavage of Arg-|-Ile bond in factor X to form factor Xa.. In terms of biological role, initiates the extrinsic pathway of blood coagulation. Serine protease that circulates in the blood in a zymogen form. Factor VII is converted to factor VIIa by factor Xa, factor XIIa, factor IXa, or thrombin by minor proteolysis. In the presence of tissue factor and calcium ions, factor VIIa then converts factor X to factor Xa by limited proteolysis. Factor VIIa also converts factor IX to factor IXa in the presence of tissue factor and calcium. The sequence is that of Coagulation factor VII (F7) from Homo sapiens (Human).